A 147-amino-acid chain; its full sequence is Transthyretin (147 aa).

The signal sequence occupies residues 1-20; sequence MASHRLLLLCLAGLVFVSEA. Cys30 is subject to Sulfocysteine. Lys35 is a binding site for L-thyroxine. At Glu62 the chain carries 4-carboxyglutamate. Ser72 carries the phosphoserine modification. Glu74 is a binding site for L-thyroxine. N-linked (GlcNAc...) asparagine glycosylation is present at Asn118. Ser137 contacts L-thyroxine.

The protein belongs to the transthyretin family. As to quaternary structure, homotetramer. Dimer of dimers. In the homotetramer, subunits assemble around a central channel that can accommodate two ligand molecules. Interacts with RBP4. Sulfonation of the reactive cysteine Cys-30 enhances the stability of the native conformation of TTR, avoiding misassembly of the protein leading to amyloid formation. Detected in liver.

The protein localises to the secreted. Functionally, thyroid hormone-binding protein. Probably transports thyroxine from the bloodstream to the brain. This Pongo abelii (Sumatran orangutan) protein is Transthyretin (TTR).